A 257-amino-acid chain; its full sequence is UPF0246 protein Rsph17025_0016 (257 aa).

The protein belongs to the UPF0246 family.

The chain is UPF0246 protein Rsph17025_0016 from Cereibacter sphaeroides (strain ATCC 17025 / ATH 2.4.3) (Rhodobacter sphaeroides).